Consider the following 488-residue polypeptide: R3H and coiled-coil domain-containing protein 1 (488 aa).

One can recognise an R3H domain in the interval 16–81; that stretch reads NDFVHRVQEE…KRRTVICHLD (66 aa). Disordered regions lie at residues 87 to 180 and 195 to 322; these read SDGP…GDAE and KSPD…DADH. Residues 114 to 125 show a composition bias toward low complexity; that stretch reads GAAAGPRGAPAG. S232 carries the phosphoserine modification. Residues 244–321 are a coiled coil; it reads SHGMRSLVDQ…EEDEDEADAD (78 aa). The segment covering 252-265 has biased composition (acidic residues); sequence DQEEEEIEGEEEEK. Composition is skewed to basic and acidic residues over residues 266–280 and 287–301; these read VDEK…KERV and TDAQ…GERM. The segment covering 302–319 has biased composition (acidic residues); it reads DEGEDKVDAEEEDEDEAD.

This Mus musculus (Mouse) protein is R3H and coiled-coil domain-containing protein 1.